The chain runs to 60 residues: Large ribosomal subunit protein bL32 (60 aa).

The segment covering 1-20 (MAVQKSRKSRSRRDMRRSHH) has biased composition (basic residues). The interval 1–60 (MAVQKSRKSRSRRDMRRSHHHMEVAELSIDATTGEKHRRHHMTKDGFYRGRQLFKASQED) is disordered.

Belongs to the bacterial ribosomal protein bL32 family.

This is Large ribosomal subunit protein bL32 from Psychrobacter sp. (strain PRwf-1).